We begin with the raw amino-acid sequence, 205 residues long: High frequency lysogenization protein HflD homolog (205 aa).

It belongs to the HflD family.

Its subcellular location is the cytoplasm. It is found in the cell inner membrane. The chain is High frequency lysogenization protein HflD homolog from Hahella chejuensis (strain KCTC 2396).